The sequence spans 648 residues: Threonine--tRNA ligase (648 aa).

The 61-residue stretch at 1 to 61 (MIKITLPDGS…TTDGNLILYT (61 aa)) folds into the TGS domain. Residues 240-539 (DHRKLGKELE…LLEHTAGNFP (300 aa)) form a catalytic region. Zn(2+) is bound by residues Cys335, His386, and His516.

Belongs to the class-II aminoacyl-tRNA synthetase family. In terms of assembly, homodimer. Requires Zn(2+) as cofactor.

It localises to the cytoplasm. The enzyme catalyses tRNA(Thr) + L-threonine + ATP = L-threonyl-tRNA(Thr) + AMP + diphosphate + H(+). Catalyzes the attachment of threonine to tRNA(Thr) in a two-step reaction: L-threonine is first activated by ATP to form Thr-AMP and then transferred to the acceptor end of tRNA(Thr). Also edits incorrectly charged L-seryl-tRNA(Thr). The chain is Threonine--tRNA ligase from Flavobacterium johnsoniae (strain ATCC 17061 / DSM 2064 / JCM 8514 / BCRC 14874 / CCUG 350202 / NBRC 14942 / NCIMB 11054 / UW101) (Cytophaga johnsonae).